The chain runs to 458 residues: Protein adenylyltransferase FICD (458 aa).

Residues 1–23 (MILMPMASVVAVAEPKWVSVWGR) are Cytoplasmic-facing. A helical; Signal-anchor for type II membrane protein membrane pass occupies residues 24–44 (FLWMTLLSMALGSLLALLLPL). Residues 45 to 458 (GAVEEQCLAV…GFKETLPVRP (414 aa)) are Lumenal-facing. O-AMP-serine; by autocatalysis is present on serine 79. Threonine 80 is modified (O-AMP-threonine; by autocatalysis). TPR repeat units lie at residues 106–139 (AKAALNQALEMKRQGKRGKAHKLFLHALKMDPGF) and 140–173 (VDALNELGIFSEEDKDIIQADYLYTRALTISPFH). Residue threonine 183 is modified to O-AMP-threonine; by autocatalysis. Positions 230 to 235 (TVAIEG) match the Inhibitory (S/T)XXXE(G/N) motif motif. Glutamate 234 contacts ATP. Asparagine 275 is a glycosylation site (N-linked (GlcNAc...) asparagine). Residues 285 to 420 (VTIDHMLEIH…VRPFIRFIAK (136 aa)) form the Fido domain. Position 316-319 (316-319 (VGHH)) interacts with ATP. The active site involves histidine 363. ATP-binding positions include 367–374 (DGNGRTSR), 399–400 (YY), and asparagine 407.

Belongs to the fic family. In terms of assembly, homodimer. Interacts with HD. Mg(2+) is required as a cofactor. The cofactor is Mn(2+). Post-translationally, auto-AMPylated in vitro.

It is found in the endoplasmic reticulum membrane. It catalyses the reaction L-tyrosyl-[protein] + ATP = O-(5'-adenylyl)-L-tyrosyl-[protein] + diphosphate. The enzyme catalyses 3-O-(5'-adenylyl)-L-threonyl-[protein] + H2O = L-threonyl-[protein] + AMP + H(+). It carries out the reaction L-threonyl-[protein] + ATP = 3-O-(5'-adenylyl)-L-threonyl-[protein] + diphosphate. The side chain of Glu-234 determines which of the two opposing activities (AMPylase or de-AMPylase) will take place. In response to endoplasmic reticulum stress, mediates de-AMPylase activity. Adenylyltransferase activity is inhibited by the inhibitory helix present at the N-terminus: Glu-234 binds ATP and competes with ATP-binding at Arg-374, thereby preventing adenylyltransferase activity. In unstressed cells, disengagement of Glu-234 promotes adenylyltransferase activity. Activation dissociates ATP-binding from Glu-234, allowing ordered binding of the entire ATP moiety with the alpha-phosphate in an orientation that is productive for accepting an incoming target hydroxyl side chain. In terms of biological role, protein that can both mediate the addition of adenosine 5'-monophosphate (AMP) to specific residues of target proteins (AMPylation), and the removal of the same modification from target proteins (de-AMPylation), depending on the context. The side chain of Glu-231 determines which of the two opposing activities (AMPylase or de-AMPylase) will take place. Acts as a key regulator of the ERN1/IRE1-mediated unfolded protein response (UPR) by mediating AMPylation or de-AMPylation of HSPA5/BiP. In unstressed cells, acts as an adenylyltransferase by mediating AMPylation of HSPA5/BiP at 'Thr-518', thereby inactivating it. In response to endoplasmic reticulum stress, acts as a phosphodiesterase by mediating removal of ATP (de-AMPylation) from HSPA5/BiP at 'Thr-518', leading to restore HSPA5/BiP activity. Although it is able to AMPylate RhoA, Rac and Cdc42 Rho GTPases in vitro, Rho GTPases do not constitute physiological substrates. This is Protein adenylyltransferase FICD from Rattus norvegicus (Rat).